Consider the following 132-residue polypeptide: uncharacterized protein (132 aa).

Residues 66-86 form a helical membrane-spanning segment; sequence LPPMLLVLAALFVKGLIPLVL.

It is found in the membrane. This is an uncharacterized protein from Saccharomyces cerevisiae (strain ATCC 204508 / S288c) (Baker's yeast).